The primary structure comprises 558 residues: Cytochrome P450 monooxygenase sdnT (558 aa).

The chain crosses the membrane as a helical span at residues isoleucine 21–isoleucine 41. Residues glutamine 298–proline 317 form a disordered region. Asparagine 464 and asparagine 495 each carry an N-linked (GlcNAc...) asparagine glycan. Cysteine 505 contacts heme.

The protein belongs to the cytochrome P450 family. Heme serves as cofactor.

Its subcellular location is the membrane. Its pathway is antibiotic biosynthesis. Cytochrome P450 monooxygenase; part of the gene cluster that mediates the biosynthesis of sordarin and hypoxysordarin, glycoside antibiotics with a unique tetracyclic diterpene aglycone structure. First, the geranylgeranyl diphosphate synthase sdnC constructs GGDP from farnesyl diphosphate and isopentenyl diphosphate. The diterpene cyclase sdnA then catalyzes the cyclization of GGDP to afford cycloaraneosene. Cycloaraneosene is then hydroxylated four times by the putative cytochrome P450 monooxygenases sdnB, sdnE, sdnF and sdnH to give a hydroxylated cycloaraneosene derivative such as cycloaraneosene-8,9,13,19-tetraol. Although the order of the hydroxylations is unclear, at least C8, C9 and C13 of the cycloaraneosene skeleton are hydroxylated before the sordaricin formation. Dehydration of the 13-hydroxy group of the hydroxylated cycloaraneosene derivative might be catalyzed by an unassigned hypothetical protein such as sdnG and sdnP to construct the cyclopentadiene moiety. The FAD-dependent oxidoreductase sdnN is proposed to catalyze the oxidation at C9 of the hydroxylated cycloaraneosene derivative and also catalyze the Baeyer-Villiger oxidation to give the lactone intermediate. The presumed lactone intermediate would be hydrolyzed to give an acrolein moiety and a carboxylate moiety. Then, [4+2]cycloaddition would occur between the acrolein moiety and the cyclopentadiene moiety to give sordaricin. SdnN might also be involved in the [4+2]cycloaddition after the hypothesized oxidation to accommodate the oxidized product and prompt the [4+2]cycloaddition. GDP-6-deoxy-D-altrose may be biosynthesized from GDP-D-mannose by the putative GDP-mannose-4,6-dehydratase sdnI and the short-chain dehydrogenase sdnK. The glycosyltransferase sdnJ catalyzes the attachment of 6-deoxy-D-altrose onto the 19-hydroxy group of sordaricin to give 4'-O-demethylsordarin. The methyltransferase sdnD would complete the biosynthesis of sordarin. Sordarin can be further modified into hypoxysordarin. The unique acyl chain at the 3'-hydroxy group of hypoxysordarin would be constructed by an iterative type I PKS sdnO and the trans-acting polyketide methyltransferase sdnL. SdnL would be responsible for the introduction of an alpha-methyl group of the polyketide chain. Alternatively, the beta-lactamase-like protein sdnR might be responsible for the cleavage and transfer of the polyketide chain from the PKS sdnO to sordarin. Two putative cytochrome P450 monooxygenases, sdnQ and sdnT, might catalyze the epoxidations of the polyketide chain to complete the biosynthesis of hypoxysordarin. Transcriptional regulators sdnM and sdnS are presumably encoded for the transcriptional regulation of the expression of the sdn gene cluster. This Sordaria araneosa (Pleurage araneosa) protein is Cytochrome P450 monooxygenase sdnT.